The primary structure comprises 349 residues: MTVLNRTDTLVDELTADITNTPLGYGGVDGDERWAAEIRRLAHLRGATVLAHNYQLPAIQDVADHVGDSLALSRVAAEAPEDTIVFCGVHFMAETAKILSPHKTVLIPDQRAGCSLADSITPDELRAWKDEHPGAVVVSYVNTTAAVKALTDICCTSSNAVDVVASIDPDREVLFCPDQFLGAHVRRVTGRKNLHVWAGECHVHAGINGDELADQARAHPDAELFVHPECGCATSALYLAGEGAFPAERVKILSTGGMLEAAHTTRARQVLVATEVGMLHQLRRAAPEVDFRAVNDRASCKYMKMITPAALLRCLVEGADEVHVDPGIAASGRRSVQRMIEIGHPGGGE.

Residues His52 and Ser69 each contribute to the iminosuccinate site. Cys114 contacts [4Fe-4S] cluster. Residues 140–142 and Ser157 each bind iminosuccinate; that span reads YVN. Cys201 serves as a coordination point for [4Fe-4S] cluster. Iminosuccinate contacts are provided by residues 227 to 229 and Thr255; that span reads HPE. Cys300 contacts [4Fe-4S] cluster.

This sequence belongs to the quinolinate synthase family. Type 2 subfamily. [4Fe-4S] cluster serves as cofactor.

The protein localises to the cytoplasm. It catalyses the reaction iminosuccinate + dihydroxyacetone phosphate = quinolinate + phosphate + 2 H2O + H(+). The protein operates within cofactor biosynthesis; NAD(+) biosynthesis; quinolinate from iminoaspartate: step 1/1. In terms of biological role, catalyzes the condensation of iminoaspartate with dihydroxyacetone phosphate to form quinolinate. The polypeptide is Quinolinate synthase (Mycobacterium bovis (strain BCG / Tokyo 172 / ATCC 35737 / TMC 1019)).